The chain runs to 280 residues: Coiled-coil domain-containing protein 106 (280 aa).

Residues 63 to 101 are a coiled coil; the sequence is TQLHMALERNSWLQKRIEDLEEERDFLRCQLDKFISSAR. Positions 103 to 121 are enriched in basic and acidic residues; sequence EAEDHCRMKPGPRRMEGDS. The tract at residues 103-176 is disordered; it reads EAEDHCRMKP…KPKARERQRV (74 aa). S130 is subject to Phosphoserine. Positions 133 to 146 are enriched in low complexity; sequence ESAASSLSGASEEG. Positions 151 to 164 match the Bipartite nuclear localization signal motif; that stretch reads RRRQKQKGGASRRR. Positions 152–168 are enriched in basic residues; that stretch reads RRQKQKGGASRRRFGKP.

Interacts with p53/TP53.

It is found in the nucleus. Functionally, promotes the degradation of p53/TP53 protein and inhibits its transactivity. The chain is Coiled-coil domain-containing protein 106 (CCDC106) from Homo sapiens (Human).